A 586-amino-acid chain; its full sequence is Transmembrane protease serine 13 (586 aa).

2 disordered regions span residues 1-115 (MERD…VTTS) and 131-157 (PIRS…LPKF). The Cytoplasmic segment spans residues 1-165 (MERDSHGNAS…KFTWREGQKQ (165 aa)). One copy of the 1-1 repeat lies at 9 to 13 (ASPAR). The interval 9–93 (ASPARTPSAG…ASPARASPAL (85 aa)) is 13 X 5 AA repeats of A-S-P-A-[GLQR]. The stretch at 14 to 18 (TPSAG) is one 2-1; approximate repeat. The segment covering 14 to 52 (TPSAGASPAQASPAGTPPGRASPAQASPAQASPAGTPPG) has biased composition (low complexity). Residues 14-68 (TPSAGASPAQASPAGTPPGRASPAQASPAQASPAGTPPGRASPAQASPAGTPPGR) are 4 X 5 AA repeats of T-P-P-G-R. 10 tandem repeats follow at residues 19–23 (ASPAQ), 24–28 (ASPAG), 29–33 (TPPGR), 34–38 (ASPAQ), 39–43 (ASPAQ), 44–48 (ASPAG), 49–53 (TPPGR), 54–58 (ASPAQ), 59–63 (ASPAG), and 64–68 (TPPGR). The 1-9; approximate repeat unit spans residues 69 to 78 (ASPGRASPAQ). Low complexity-rich tracts occupy residues 69-111 (ASPG…RSAS) and 133-144 (RSSPARSAPATR). 3 consecutive repeat copies span residues 79–83 (ASPAQ), 84–88 (ASPAR), and 89–93 (ASPAL). Residues 166-186 (LPLIGCVLLLIALVVSLIILF) traverse the membrane as a helical; Signal-anchor for type II membrane protein segment. Residues 187-586 (QFWQGHTGIR…GGDPGGAPRL (400 aa)) are Extracellular-facing. The region spanning 195-325 (IRYKEQRESC…HCGLRAMTGR (131 aa)) is the SRCR domain. In terms of domain architecture, LDL-receptor class A spans 204–226 (CPKHAVRCDGVVDCKLKSDELGC). Disulfide bonds link C250/C314, C263/C317, and C351/C367. N-linked (GlcNAc...) asparagine glycans are attached at residues N255 and N292. The Peptidase S1 domain occupies 326-559 (IVGGALASDS…VLPWIYSKME (234 aa)). Residue H366 is the Charge relay system of the active site. Residue N405 is glycosylated (N-linked (GlcNAc...) asparagine). Residue D414 is the Charge relay system of the active site. N445 carries an N-linked (GlcNAc...) asparagine glycan. Cystine bridges form between C448–C517, C480–C496, and C507–C535. S511 acts as the Charge relay system in catalysis. The segment covering 565 to 574 (QDTAPSRLGT) has biased composition (polar residues). The segment at 565-586 (QDTAPSRLGTSSGGDPGGAPRL) is disordered. The span at 575 to 586 (SSGGDPGGAPRL) shows a compositional bias: gly residues.

This sequence belongs to the peptidase S1 family. As to quaternary structure, interacts with SPINT1/HAI-1; the interaction promotes the phosphorylation and cell membrane localization of TMPRSS13. Interacts with SPINT2/HAI-2; the interaction promotes the phosphorylation and cell membrane localization of TMPRSS13. In terms of processing, the inactive zymogen is post-translationally modified and then trafficked to the cell surface, whereby it undergoes autocatalytic cleavage resulting in an activated form that is released extracellularly. Post-translationally, phosphorylation is required for localization at the cell surface. Phosphorylation increases following inhibition of protease activity by SPINT2/HAI-2. N-glycosylation of Asn-405 and Asn-445 is required for exit from the endoplasmic reticulum and trafficking to the cell surface. Also required for autocleavage of the zymogen, activation and secretion of the mature protein. Expressed in placenta. As to expression, predominantly expressed in lung, placenta, pancreas, and prostate. In terms of tissue distribution, expressed in lung, placenta, pancreas, and prostate. Weakly expressed in testis and peripheral blood lymphocytes.

The protein localises to the cell membrane. The protein resides in the secreted. Its subcellular location is the cytoplasm. Its activity is regulated as follows. Cleavage of HGF is inhibited by SPINT1/HAI-1 via the BPTI/Kunitz inhibitor 1 domain. Functionally, serine protease. Cleaves the proform of PRSS8/prostasin to form the active protein. Cleaves the proform of HGF to form the active protein which promotes MAPK signaling. Promotes the formation of the stratum corneum and subsequently the epidermal barrier in embryos. The chain is Transmembrane protease serine 13 (TMPRSS13) from Homo sapiens (Human).